The sequence spans 116 residues: NADH-ubiquinone oxidoreductase chain 3 (116 aa).

The next 3 membrane-spanning stretches (helical) occupy residues 3 to 23, 56 to 76, and 88 to 108; these read LFAT…LVSF, FFLV…LLPL, and TLFW…YEWA.

Belongs to the complex I subunit 3 family. In terms of assembly, core subunit of respiratory chain NADH dehydrogenase (Complex I) which is composed of 45 different subunits.

The protein resides in the mitochondrion inner membrane. It catalyses the reaction a ubiquinone + NADH + 5 H(+)(in) = a ubiquinol + NAD(+) + 4 H(+)(out). Core subunit of the mitochondrial membrane respiratory chain NADH dehydrogenase (Complex I) which catalyzes electron transfer from NADH through the respiratory chain, using ubiquinone as an electron acceptor. Essential for the catalytic activity of complex I. The sequence is that of NADH-ubiquinone oxidoreductase chain 3 (mt-nd3) from Danio rerio (Zebrafish).